Here is a 101-residue protein sequence, read N- to C-terminus: Replication restart protein PriB (101 aa).

One can recognise an SSB domain in the interval 1–101; sequence MATNHLVLSG…LHAENVELKT (101 aa).

It belongs to the PriB family. As to quaternary structure, homodimer. Interacts with PriA and DnaT. Component of the replication restart primosome. Primosome assembly occurs via a 'hand-off' mechanism. PriA binds to replication forks, subsequently PriB then DnaT bind; DnaT then displaces ssDNA to generate the helicase loading substrate.

Its function is as follows. Involved in the restart of stalled replication forks, which reloads the replicative helicase on sites other than the origin of replication; the PriA-PriB pathway is the major replication restart pathway. During primosome assembly it facilitates complex formation between PriA and DnaT on DNA; stabilizes PriA on DNA. Stimulates the DNA unwinding activity of PriA helicase. This Shewanella woodyi (strain ATCC 51908 / MS32) protein is Replication restart protein PriB.